A 152-amino-acid chain; its full sequence is Spermine/spermidine N(1)-acetyltransferase (152 aa).

The region spanning 3-152 is the N-acetyltransferase domain; sequence INIKAVTDDN…NGEKVMVKEL (150 aa). Acetyl-CoA is bound by residues 82 to 84, 89 to 95, and 122 to 131; these read FFI, QGKGLGK, and NIHAIRLYQR. Tyrosine 129 serves as the catalytic Proton donor.

The protein belongs to the acetyltransferase family.

It carries out the reaction an alkane-alpha,omega-diamine + acetyl-CoA = an N-acetylalkane-alpha,omega-diamine + CoA + H(+). It catalyses the reaction spermine + acetyl-CoA = N(1)-acetylspermine + CoA + H(+). The catalysed reaction is spermidine + acetyl-CoA = N(1)-acetylspermidine + CoA + H(+). Its pathway is amine and polyamine degradation; spermine degradation. The protein operates within amine and polyamine degradation; spermidine degradation. Putrescine and N(8)-acetylspermidine are competitive inhibitors of spermidine acetylation. In terms of biological role, acetylates both spermidine and spermine at primary propyl amine moieties, with spermine being the preferred substrate. The protein is Spermine/spermidine N(1)-acetyltransferase (bltD) of Bacillus subtilis (strain 168).